The sequence spans 416 residues: Putative L-glutamine:3-amino-2,3-dideoxy-scyllo-inosose aminotransferase (416 aa).

Lys199 carries the N6-(pyridoxal phosphate)lysine modification.

The protein belongs to the DegT/DnrJ/EryC1 family. L-glutamine:2-deoxy-scyllo-inosose/scyllo-inosose aminotransferase subfamily. Pyridoxal 5'-phosphate serves as cofactor.

The enzyme catalyses 3-amino-2,3-dideoxy-scyllo-inosose + L-glutamine = 2-deoxystreptamine + 2-oxoglutaramate. The protein operates within metabolic intermediate biosynthesis; 2-deoxystreptamine biosynthesis; 2-deoxystreptamine from D-glucose 6-phosphate: step 4/4. It participates in antibiotic biosynthesis; tobramycin biosynthesis. Its function is as follows. Catalyzes the transamination of 3-amino-2,3-dideoxy-scyllo-inosose (amino-DOI) into 2-deoxystreptamine (DOS). This is Putative L-glutamine:3-amino-2,3-dideoxy-scyllo-inosose aminotransferase (tobS2) from Streptoalloteichus tenebrarius (strain ATCC 17920 / DSM 40477 / JCM 4838 / CBS 697.72 / NBRC 16177 / NCIMB 11028 / NRRL B-12390 / A12253. 1 / ISP 5477) (Streptomyces tenebrarius).